The sequence spans 141 residues: Cystatin-13 (141 aa).

Residues 1–24 (MARFLQTLLFLVIMVEFVSRRVEA) form the signal peptide. A secondary area of contact region spans residues 76–80 (QITDS). 2 disulfide bridges follow: cysteine 94–cysteine 104 and cysteine 118–cysteine 138.

This sequence belongs to the cystatin family. Expressed exclusively in testis. Found in spermatagonia, spermatocytes, round spermatids, elongating spermatids and spermatozoa.

It is found in the secreted. The protein localises to the cytoplasm. Its function is as follows. May perform a specialized role during sperm development and maturation. The protein is Cystatin-13 of Mus musculus (Mouse).